A 167-amino-acid chain; its full sequence is Kininogen-1 (167 aa).

Positions M1–A23 are cleaved as a signal peptide.

This sequence belongs to the bradykinin-related peptide family. As to expression, expressed by the skin glands.

It localises to the secreted. In terms of biological role, vasodilator. Bradykinin produces in vitro relaxation of rat arterial smooth muscle and constriction of intestinal smooth muscle. May target bradykinin receptors (BDKRB). The protein is Kininogen-1 of Bombina orientalis (Oriental fire-bellied toad).